Consider the following 87-residue polypeptide: MKIILWLCVFGLFLATLFPVSWQMPVESGLSSEDSASSESFASKIKRHSDGTFTSDLSKQMEEEAVRLFIEWLKNGGPSSGAPPPSG.

The N-terminal stretch at Met1 to Ser21 is a signal peptide. Residues Trp22 to Ile45 constitute a propeptide that is removed on maturation. The residue at position 86 (Ser86) is a Serine amide.

This sequence belongs to the glucagon family. In terms of tissue distribution, expressed by the venom gland.

Its subcellular location is the secreted. Functionally, stimulates vasoactive intestinal peptide (VIP) receptors in high concentrations (&gt;100 nM), resulting in both an increase in cAMP and amylase secretion from pancreatic acini, although at low concentrations (between 0.3 and 3 nM) it increases cAMP without stimulating amylase release. Stimulates the GLP-1 receptor (GLP1R). Induces hypotension that is mediated by relaxation of cardiac smooth muscle. This chain is Exendin-3, found in Heloderma horridum horridum (Mexican beaded lizard).